The primary structure comprises 175 residues: Putative metal-dependent hydrolase BPUM_0784 (175 aa).

The Zn(2+) site is built by His65, His157, and His161.

Belongs to the metal hydrolase YfiT family. As to quaternary structure, homodimer. It depends on Zn(2+) as a cofactor.

It localises to the cytoplasm. In terms of biological role, possible metal-dependent hydrolase. The protein is Putative metal-dependent hydrolase BPUM_0784 of Bacillus pumilus (strain SAFR-032).